A 651-amino-acid chain; its full sequence is Carboxypeptidase S1 homolog A (651 aa).

The N-terminal stretch at 1–19 (MHLATGLAVALPFIGAASA) is a signal peptide. Cys50 and Cys121 form a disulfide bridge. N-linked (GlcNAc...) asparagine glycans are attached at residues Asn77, Asn125, Asn128, Asn161, Asn184, and Asn202. Ser238 is a catalytic residue. N-linked (GlcNAc...) asparagine glycans are attached at residues Asn260, Asn299, Asn308, Asn347, and Asn410. Disulfide bonds link Cys325–Cys361 and Cys332–Cys354. The active site involves Asp458. Cys461 provides a ligand contact to substrate. N-linked (GlcNAc...) asparagine glycosylation is found at Asn474 and Asn504. Residue His515 is part of the active site. Glu516 provides a ligand contact to substrate. The disordered stretch occupies residues 604-630 (KSPAGKKQGPPPTSTSPPSPTSSSEGS). Residues 612–623 (GPPPTSTSPPSP) show a composition bias toward pro residues. Residue Ser625 is the site of GPI-anchor amidated serine attachment. Residues 626 to 651 (SSEGSVKEFSVSVLGVSVLAAITFFL) constitute a propeptide, removed in mature form.

Belongs to the peptidase S10 family.

The protein localises to the cell membrane. The catalysed reaction is Preferential release of a C-terminal arginine or lysine residue.. In terms of biological role, extracellular serine carboxypeptidase that contributes to pathogenicity. This Arthroderma otae (strain ATCC MYA-4605 / CBS 113480) (Microsporum canis) protein is Carboxypeptidase S1 homolog A (SCPA).